Consider the following 331-residue polypeptide: Adenine deaminase (331 aa).

Zn(2+)-binding residues include His17, His19, and His197. Glu200 functions as the Proton donor in the catalytic mechanism. Asp278 serves as a coordination point for Zn(2+). A substrate-binding site is contributed by Asp279.

It belongs to the metallo-dependent hydrolases superfamily. Adenosine and AMP deaminases family. Adenine deaminase type 2 subfamily. Zn(2+) is required as a cofactor.

It catalyses the reaction adenine + H2O + H(+) = hypoxanthine + NH4(+). Its function is as follows. Catalyzes the hydrolytic deamination of adenine to hypoxanthine. Plays an important role in the purine salvage pathway and in nitrogen catabolism. This is Adenine deaminase from Wolinella succinogenes (strain ATCC 29543 / DSM 1740 / CCUG 13145 / JCM 31913 / LMG 7466 / NCTC 11488 / FDC 602W) (Vibrio succinogenes).